The primary structure comprises 220 residues: CDP-diacylglycerol--inositol 3-phosphatidyltransferase (220 aa).

Over 1 to 20 the chain is Cytoplasmic; the sequence is MSSNSTPEKVTAEHVLWYIP. The helical transmembrane segment at 21-41 threads the bilayer; that stretch reads NKIGYVRVITAALSFFVMKNH. At 42-45 the chain is on the lumenal side; that stretch reads PTAF. A helical membrane pass occupies residues 46 to 66; sequence TWLYSTSCLLDALDGTMARKY. Positions 56 and 59 each coordinate Mg(2+). A CDP-1,2-diacyl-sn-glycerol contacts are provided by Gly60, Arg64, and Ser70. Residues 67 to 75 lie on the Cytoplasmic side of the membrane; it reads NQVSSLGAV. A helical transmembrane segment spans residues 76–96; sequence LDMVTDRSSTAGLMCFLCVQY. Mg(2+) contacts are provided by Asp77 and Asp81. The Proton acceptor role is filled by Asp81. The Lumenal segment spans residues 97-98; sequence PQ. A helical membrane pass occupies residues 99 to 119; that stretch reads WCVFFQLMLGLDITSHYMHMY. Residues 120–145 lie on the Cytoplasmic side of the membrane; the sequence is ASLSAGKTSHKSVGEGESRLLHLYYT. Residues 146-166 traverse the membrane as a helical segment; it reads RRDVLFTICAFNELFYAGLYL. The Lumenal portion of the chain corresponds to 167–170; the sequence is QLFS. Residues 171-191 form a helical membrane-spanning segment; it reads NSATFGKWTTIISFPGYVFKQ. Residues 192–220 lie on the Cytoplasmic side of the membrane; the sequence is TANVVQLKRAALILADNDAKNANEKNKTY.

Belongs to the CDP-alcohol phosphatidyltransferase class-I family. Requires Mn(2+) as cofactor. It depends on Mg(2+) as a cofactor.

The protein localises to the microsome membrane. The protein resides in the endoplasmic reticulum membrane. It is found in the golgi apparatus membrane. Its subcellular location is the mitochondrion outer membrane. The enzyme catalyses a CDP-1,2-diacyl-sn-glycerol + myo-inositol = a 1,2-diacyl-sn-glycero-3-phospho-(1D-myo-inositol) + CMP + H(+). Its function is as follows. Catalyzes the synthesis of phosphatidylinositol (PtdIns). The sequence is that of CDP-diacylglycerol--inositol 3-phosphatidyltransferase from Saccharomyces cerevisiae (strain ATCC 204508 / S288c) (Baker's yeast).